The following is a 674-amino-acid chain: NADH-quinone oxidoreductase subunit L (674 aa).

16 helical membrane-spanning segments follow: residues 4-24 (MTLY…AGLF), 36-56 (VTIL…WGFL), 67-87 (VYTW…VDTM), 90-110 (MMMV…IGYM), 115-135 (VGYQ…LMLI), 140-160 (FIQL…LIGF), 180-200 (VGDF…GGSL), 219-239 (LFPG…FVGA), 259-279 (PTPI…LFMV), 293-313 (LSVI…LGVI), 348-368 (VMTH…AIIG), 385-405 (MPIT…TPFF), 425-445 (GSGF…FYAF), 488-508 (VVTL…YIAI), 549-569 (LHSP…LLYV), and 653-673 (YAAA…WGLF).

Belongs to the complex I subunit 5 family.

The protein resides in the cell membrane. It carries out the reaction a quinone + NADH + 5 H(+)(in) = a quinol + NAD(+) + 4 H(+)(out). In terms of biological role, NDH-1 shuttles electrons from NADH, via FMN and iron-sulfur (Fe-S) centers, to quinones in the respiratory chain. The immediate electron acceptor for the enzyme in this species is believed to be ubiquinone. Couples the redox reaction to proton translocation (for every two electrons transferred, four hydrogen ions are translocated across the cytoplasmic membrane), and thus conserves the redox energy in a proton gradient. This chain is NADH-quinone oxidoreductase subunit L (nuoL), found in Neisseria meningitidis serogroup A / serotype 4A (strain DSM 15465 / Z2491).